The chain runs to 551 residues: uncharacterized protein (551 aa).

The next 6 membrane-spanning stretches (helical) occupy residues 1-21 (MIAY…IVNS), 25-45 (WTYF…LMVS), 99-119 (GALF…FGFN), 124-144 (LGVL…SLMW), 266-286 (FAFL…GVFY), and 490-510 (FLDL…SAED).

Its subcellular location is the cell membrane. This is an uncharacterized protein from Haemophilus influenzae (strain ATCC 51907 / DSM 11121 / KW20 / Rd).